The chain runs to 164 residues: Cold-inducible RNA-binding protein (164 aa).

An RRM domain is found at Gly6–Lys84. Residues Ala65–Gly164 are disordered. The segment covering Tyr93–Gly118 has biased composition (gly residues). Positions Ser155–Gly164 are enriched in basic and acidic residues.

In terms of assembly, interacts with prmt1. Interacts with elavl1/elrA (via RRM3). Associates with ribosomes. Methylated on arginine residues within RGG motifs. Methylation by prmt1 promotes cytoplasmic accumulation.

It localises to the nucleus. It is found in the nucleoplasm. The protein localises to the cytoplasm. Its function is as follows. Cold-inducible mRNA binding protein. Acts cooperatively with elavl1/elrA to stabilize AU-rich element (ARE)-containing mRNAs by binding to them and inhibiting their deadenylation. Essential for embryonic gastrulation and neural development, acting to maintain the expression of a set of adhesion molecules, and cell movement during embryogenesis. Required for pronephros development. May play a role in hibernation. This Aquarana catesbeiana (American bullfrog) protein is Cold-inducible RNA-binding protein.